The following is a 1047-amino-acid chain: Carbamoyl phosphate synthase large chain (1047 aa).

The tract at residues 1–398 (MPRRDDIHRI…ALMKAIASLD (398 aa)) is carboxyphosphate synthetic domain. ATP contacts are provided by Arg129, Arg169, Gly175, Gly176, Glu208, Leu210, Glu215, Gly241, Val242, His243, Gln284, and Glu296. The ATP-grasp 1 domain occupies 133-325 (YEFLKAMGEP…IARIAAKIAA (193 aa)). Gln284, Glu296, and Asn298 together coordinate Mg(2+). Gln284, Glu296, and Asn298 together coordinate Mn(2+). An oligomerization domain region spans residues 399 to 539 (NAFSSNIRLH…YSTYEDEDET (141 aa)). A carbamoyl phosphate synthetic domain region spans residues 540–916 (PDLSGSIMII…ALRKSLQRSI (377 aa)). An ATP-grasp 2 domain is found at 665–854 (SRVIEGLGIK…WVRLAVECMI (190 aa)). Arg701, Lys738, Leu740, Glu745, Gly770, Val771, His772, Ser773, Gln813, and Glu825 together coordinate ATP. Residues Gln813, Glu825, and Asn827 each contribute to the Mg(2+) site. Positions 813, 825, and 827 each coordinate Mn(2+). An MGS-like domain is found at 910 to 1047 (KSLQRSISSV…REIGDYLQVS (138 aa)). The allosteric domain stretch occupies residues 916 to 1047 (ISSVLITVRD…REIGDYLQVS (132 aa)).

This sequence belongs to the CarB family. Composed of two chains; the small (or glutamine) chain promotes the hydrolysis of glutamine to ammonia, which is used by the large (or ammonia) chain to synthesize carbamoyl phosphate. Tetramer of heterodimers (alpha,beta)4. Mg(2+) serves as cofactor. Mn(2+) is required as a cofactor.

It catalyses the reaction hydrogencarbonate + L-glutamine + 2 ATP + H2O = carbamoyl phosphate + L-glutamate + 2 ADP + phosphate + 2 H(+). The catalysed reaction is hydrogencarbonate + NH4(+) + 2 ATP = carbamoyl phosphate + 2 ADP + phosphate + 2 H(+). The protein operates within amino-acid biosynthesis; L-arginine biosynthesis; carbamoyl phosphate from bicarbonate: step 1/1. Its pathway is pyrimidine metabolism; UMP biosynthesis via de novo pathway; (S)-dihydroorotate from bicarbonate: step 1/3. Functionally, large subunit of the glutamine-dependent carbamoyl phosphate synthetase (CPSase). CPSase catalyzes the formation of carbamoyl phosphate from the ammonia moiety of glutamine, carbonate, and phosphate donated by ATP, constituting the first step of 2 biosynthetic pathways, one leading to arginine and/or urea and the other to pyrimidine nucleotides. The large subunit (synthetase) binds the substrates ammonia (free or transferred from glutamine from the small subunit), hydrogencarbonate and ATP and carries out an ATP-coupled ligase reaction, activating hydrogencarbonate by forming carboxy phosphate which reacts with ammonia to form carbamoyl phosphate. The protein is Carbamoyl phosphate synthase large chain of Thermoplasma acidophilum (strain ATCC 25905 / DSM 1728 / JCM 9062 / NBRC 15155 / AMRC-C165).